A 396-amino-acid chain; its full sequence is Peroxisome proliferator-activated receptor delta (396 aa).

The segment at 1-24 is disordered; the sequence is MKEEIPPRSPILDEQPSTPLEHQE. Residues 15 to 24 are compositionally biased toward polar residues; it reads QPSTPLEHQE. Residues 28–102 constitute a DNA-binding region (nuclear receptor); it reads SVDCKICGDR…LGMSHNAIRF (75 aa). NR C4-type zinc fingers lie at residues 31–51 and 68–90; these read CKIC…CEGC and CDRN…FNKC. An NR LBD domain is found at 166 to 394; sequence FVIHDMDTLW…HPLLQEIYRD (229 aa).

This sequence belongs to the nuclear hormone receptor family. NR1 subfamily. Heterodimer with the retinoid X receptor. 'Lys-48'-linked polyubiquitinated; leading to proteasomal degradation. Deubiquitinated and stabilized by OTUD3. In terms of tissue distribution, ubiquitous.

Its subcellular location is the nucleus. Ligand-activated transcription factor key mediator of energy metabolism in adipose tissues. Receptor that binds peroxisome proliferators such as hypolipidemic drugs and fatty acids. Has a preference for poly-unsaturated fatty acids, such as gamma-linoleic acid and eicosapentanoic acid. Once activated by a ligand, the receptor binds to promoter elements of target genes. Regulates the peroxisomal beta-oxidation pathway of fatty acids. Functions as a transcription activator for the acyl-CoA oxidase gene. Decreases expression of NPC1L1 once activated by a ligand. This is Peroxisome proliferator-activated receptor delta (ppard) from Xenopus laevis (African clawed frog).